Here is a 34-residue protein sequence, read N- to C-terminus: uncharacterized protein (34 aa).

Residues 10 to 30 (LIITSSFFAIAVVLVLSVLLI) traverse the membrane as a helical segment.

It is found in the membrane. This is an uncharacterized protein from Escherichia coli O157:H7.